The primary structure comprises 202 residues: Peptide methionine sulfoxide reductase A1 (202 aa).

The interval 1 to 20 (MNILNKLGIGSSRQTNMDPS) is disordered. The residue at position 189 (Ser-189) is a Phosphoserine.

The protein belongs to the MsrA Met sulfoxide reductase family.

The protein localises to the cytoplasm. Its subcellular location is the cytosol. It catalyses the reaction L-methionyl-[protein] + [thioredoxin]-disulfide + H2O = L-methionyl-(S)-S-oxide-[protein] + [thioredoxin]-dithiol. The enzyme catalyses [thioredoxin]-disulfide + L-methionine + H2O = L-methionine (S)-S-oxide + [thioredoxin]-dithiol. In terms of biological role, catalyzes the reduction of methionine sulfoxide (MetSO) to methionine in proteins. Plays a protective role against oxidative stress by restoring activity to proteins that have been inactivated by methionine oxidation. MSRA family specifically reduces the MetSO S-enantiomer. This is Peptide methionine sulfoxide reductase A1 (MSRA1) from Arabidopsis thaliana (Mouse-ear cress).